A 164-amino-acid polypeptide reads, in one-letter code: Phosphopantetheine adenylyltransferase (164 aa).

Ser-9 contacts substrate. ATP-binding positions include 9 to 10 and His-17; that span reads SF. Positions 41, 73, and 87 each coordinate substrate. ATP is bound by residues 88–90, Glu-98, and 122–128; these read GLR and YSYLSSS.

This sequence belongs to the bacterial CoaD family. Homohexamer. It depends on Mg(2+) as a cofactor.

It is found in the cytoplasm. The catalysed reaction is (R)-4'-phosphopantetheine + ATP + H(+) = 3'-dephospho-CoA + diphosphate. It participates in cofactor biosynthesis; coenzyme A biosynthesis; CoA from (R)-pantothenate: step 4/5. Its function is as follows. Reversibly transfers an adenylyl group from ATP to 4'-phosphopantetheine, yielding dephospho-CoA (dPCoA) and pyrophosphate. In Rhodococcus erythropolis (strain PR4 / NBRC 100887), this protein is Phosphopantetheine adenylyltransferase.